A 1136-amino-acid polypeptide reads, in one-letter code: Probable LRR receptor-like serine/threonine-protein kinase At4g36180 (1136 aa).

The N-terminal stretch at 1 to 22 is a signal peptide; that stretch reads MAMDISLFFIFLVIYAPLVSYA. At 23-751 the chain is on the extracellular side; that stretch reads DESQAEIDAL…TAEGKKKKRK (729 aa). LRR repeat units follow at residues 93-115, 117-139, 141-162, 163-186, 187-210, 211-233, 235-256, and 259-280; these read MLRKLSLRSNSFNGTIPTSLAYC, RLLSVFLQYNSLSGKLPPAMRNL, SLEVFNVAGNRLSGEIPVGLPS, SLQFLDISSNTFSGQIPSGLANLT, QLQLLNLSYNQLTGEIPASLGNLQ, SLQYLWLDFNLLQGTLPSAISNC, SLVHLSASENEIGGVIPAAYGA, and KLEVLSLSNNNFSGTVPFSLFC. Residues Asn105 and Asn138 are each glycosylated (N-linked (GlcNAc...) asparagine). N-linked (GlcNAc...) asparagine glycosylation is found at Asn184, Asn192, and Asn232. Residues Asn269 and Asn281 are each glycosylated (N-linked (GlcNAc...) asparagine). LRR repeat units follow at residues 283–304, 309–330, 333–355, 357–379, 381–403, 405–426, 429–452, 453–479, 480–500, 501–524, 525–546, 549–571, 573–595, 597–620, 621–643, 645–666, 669–691, and 694–716; these read SLTIVQLGFNAFSDIVRPETTA, GLQVLDLQENRISGRFPLWLTN, SLKNLDVSGNLFSGEIPPDIGNL, RLEELKLANNSLTGEIPVEIKQC, SLDVLDFEGNSLKGQIPEFLGYM, ALKVLSLGRNSFSGYVPSSMVN, QLERLNLGENNLNGSFPVELMALT, SLSELDLSGNRFSGAVPVSISNLSNLS, FLNLSGNGFSGEIPASVGNLF, KLTALDLSKQNMSGEVPVELSGLP, NVQVIALQGNNFSGVVPEGFSS, SLRYVNLSSNSFSGEIPQTFGFL, LLVSLSLSDNHISGSIPPEIGNC, ALEVLELRSNRLMGHIPADLSRLP, RLKVLDLGQNNLSGEIPPEISQS, SLNSLSLDHNHLSGVIPGSFSG, NLTKMDLSVNNLTGEIPASLALI, and NLVYFNVSSNNLKGEIPASLGSR. Asn365 carries N-linked (GlcNAc...) asparagine glycosylation. N-linked (GlcNAc...) asparagine glycosylation is found at Asn441, Asn474, Asn477, Asn482, Asn511, Asn535, Asn554, and Asn594. Asn631 is a glycosylation site (N-linked (GlcNAc...) asparagine). Residues Asn669, Asn679, Asn699, and Asn719 are each glycosylated (N-linked (GlcNAc...) asparagine). A helical membrane pass occupies residues 752-772; the sequence is MILMIVMAAIGAFLLSLFCCF. Topologically, residues 773 to 1136 are cytoplasmic; that stretch reads YVYTLLKWRK…ADPTSQPSPA (364 aa). The segment at 786–819 is disordered; the sequence is QQSTTGEKKRSPGRTSAGSRVRSSTSRSSTENGE. A compositionally biased stretch (low complexity) spans 799-815; the sequence is RTSAGSRVRSSTSRSST. Phosphothreonine is present on residues Thr830 and Thr838. The Protein kinase domain occupies 841–1123; the sequence is FDEENVLSRT…LEGCRVGPDV (283 aa). A phosphotyrosine mark is found at Tyr915 and Tyr1010.

Belongs to the protein kinase superfamily. Ser/Thr protein kinase family.

The protein localises to the cell membrane. It catalyses the reaction L-seryl-[protein] + ATP = O-phospho-L-seryl-[protein] + ADP + H(+). The catalysed reaction is L-threonyl-[protein] + ATP = O-phospho-L-threonyl-[protein] + ADP + H(+). The polypeptide is Probable LRR receptor-like serine/threonine-protein kinase At4g36180 (Arabidopsis thaliana (Mouse-ear cress)).